Here is a 227-residue protein sequence, read N- to C-terminus: Translation initiation factor 6 (227 aa).

The protein belongs to the eIF-6 family.

Binds to the 50S ribosomal subunit and prevents its association with the 30S ribosomal subunit to form the 70S initiation complex. This chain is Translation initiation factor 6, found in Methanococcus maripaludis (strain C6 / ATCC BAA-1332).